Consider the following 272-residue polypeptide: Prohibitin 1 (272 aa).

Residue Ala2 is modified to N-acetylalanine. Phosphothreonine is present on Thr91. Residues Lys128 and Lys186 each carry the N6-acetyllysine modification. The stretch at 177–211 forms a coiled coil; that stretch reads KEFTEAVEAKQVAQQEAERARFVVEKAEQQKKAAI. Residue Lys202 is modified to N6-acetyllysine; alternate. Lys202 bears the N6-succinyllysine; alternate mark. Residue Tyr249 is modified to Phosphotyrosine.

The protein belongs to the prohibitin family. In terms of assembly, interacts with PHB2. Interacts with STOML2. Interacts with CD86 (via cytoplasmic domain); the interactions increases after priming with CD40. (Microbial infection) Interacts with human enterovirus 71/EV-71 capsid protein VP0, protein 3CD and protease 3C. In terms of tissue distribution, widely expressed in different tissues.

It localises to the mitochondrion inner membrane. The protein localises to the nucleus. The protein resides in the cell membrane. Its subcellular location is the cytoplasm. With respect to regulation, target of the anti-cancer drug Rocaglamide (Roc-A). Its function is as follows. Protein with pleiotropic attributes mediated in a cell-compartment- and tissue-specific manner, which include the plasma membrane-associated cell signaling functions, mitochondrial chaperone, and transcriptional co-regulator of transcription factors in the nucleus. Plays a role in adipose tissue and glucose homeostasis in a sex-specific manner. Contributes to pulmonary vascular remodeling by accelerating proliferation of pulmonary arterial smooth muscle cells. In the mitochondria, together with PHB2, forms large ring complexes (prohibitin complexes) in the inner mitochondrial membrane (IMM) and functions as a chaperone protein that stabilizes mitochondrial respiratory enzymes and maintains mitochondrial integrity in the IMM, which is required for mitochondrial morphogenesis, neuronal survival, and normal lifespan. The prohibitin complex, with DNAJC19, regulates cardiolipin remodeling and the protein turnover of OMA1 in a cardiolipin-binding manner. Regulates mitochondrial respiration activity playing a role in cellular aging. The prohibitin complex plays a role of mitophagy receptor involved in targeting mitochondria for autophagic degradation. Involved in mitochondrial-mediated antiviral innate immunity, activates RIG-I-mediated signal transduction and production of IFNB1 and pro-inflammatory cytokine IL6. Functionally, in the nucleus, acts as a transcription coregulator, enhances promoter binding by TP53, a transcription factor it activates, but reduces the promoter binding by E2F1, a transcription factor it represses. Interacts with STAT3 to affect IL17 secretion in T-helper Th17 cells. In terms of biological role, in the plasma membrane, cooperates with CD86 to mediate CD86-signaling in B lymphocytes that regulates the level of IgG1 produced through the activation of distal signaling intermediates. Upon CD40 engagement, required to activate NF-kappa-B signaling pathway via phospholipase C and protein kinase C activation. Its function is as follows. (Microbial infection) In neuronal cells, cell surface-expressed PHB1 is involved in human enterovirus 71/EV-71 entry into neuronal cells specifically, while membrane-bound mitochondrial PHB1 associates with the virus replication complex and facilitates viral replication. May serve as a receptor for EV71. The protein is Prohibitin 1 (Phb1) of Mus musculus (Mouse).